Consider the following 562-residue polypeptide: Extracellular matrix protein 1 (562 aa).

A signal peptide spans 1 to 19 (MGTIRSSALILACLALASA). Disordered stretches follow at residues 46–87 (GYAA…SSPE) and 119–171 (QKEQ…WNPA). Basic and acidic residues predominate over residues 129-154 (IEQKEIDPPVQHQEEIVQSRQKEEKP). A run of 2 repeats spans residues 172 to 301 (RHCQ…RPDY) and 305 to 427 (PCPI…YPNY). Residues 172-427 (RHCQQGRRGI…FAHLAPYPNY (256 aa)) form a 2 X approximate repeats region. N-linked (GlcNAc...) asparagine glycans are attached at residues Asn-376, Asn-466, and Asn-538. The tract at residues 539–562 (ATGLGQQGPTGGTNVGPAPGSKEE) is disordered. The span at 543–552 (GQQGPTGGTN) shows a compositional bias: gly residues. The residue at position 559 (Ser-559) is a Phosphoserine.

In terms of assembly, interacts (via C-terminus) with HSPG2 (via C-terminus). Interacts with EFEMP1/FBLN3 and LAMB3. Interacts with MMP9.

The protein resides in the secreted. The protein localises to the extracellular space. It is found in the extracellular matrix. Involved in endochondral bone formation as negative regulator of bone mineralization. Stimulates the proliferation of endothelial cells and promotes angiogenesis. Inhibits MMP9 proteolytic activity. This Rattus norvegicus (Rat) protein is Extracellular matrix protein 1 (Ecm1).